The chain runs to 426 residues: Ammonium transporter Rh type A (426 aa).

Topologically, residues 1 to 4 are cytoplasmic; sequence MRFK. The chain crosses the membrane as a helical span at residues 5–25; the sequence is FPLMAIGLEVVMIVLFALFVQ. Residues 26-54 are Extracellular-facing; it reads YETSVNTSRNPNETESAAMDVEKTMESYP. N-linked (GlcNAc...) asparagine glycans are attached at residues Asn-31 and Asn-37. Residues 55-75 traverse the membrane as a helical segment; that stretch reads FFQDVHIMVFAGFGFLMTFLW. Residues 76–78 are Cytoplasmic-facing; that stretch reads KYG. Residues 79–99 traverse the membrane as a helical segment; sequence FSGVGINLLIAALGLQWGTII. Topologically, residues 100-124 are extracellular; that stretch reads QGIFRSHGQKFLIEMKNMIHADFST. 2 helical membrane passes run 125-145 and 146-166; these read VTVL…QMLI and MTIL…KILW. At 167–170 the chain is on the extracellular side; that stretch reads ASDT. The chain crosses the membrane as a helical span at residues 171–191; it reads GESMTIHAFGAYFGLAVAGIL. Residues 192-210 are Cytoplasmic-facing; sequence YRSGLKEKHSNEESVYHSD. The chain crosses the membrane as a helical span at residues 211-231; that stretch reads LFAMIGSLFLWIFWPSFNSAT. At 232 to 241 the chain is on the extracellular side; the sequence is ADEAKKQYRA. Residues 242–262 traverse the membrane as a helical segment; sequence IVNTYFSLAASVVTAYACSSL. Topologically, residues 263 to 270 are cytoplasmic; the sequence is LESRGKLN. Residues 271-288 form a helical membrane-spanning segment; the sequence is MVHIQNATLAGGVAVGTC. The Extracellular segment spans residues 289 to 292; sequence ADME. Residues 293–313 form a helical membrane-spanning segment; that stretch reads IPPYYAMIIGSIAGAVSVFGF. The Cytoplasmic segment spans residues 314–331; the sequence is KFLTPLFTTKLRIHDTCG. Residues 332 to 352 form a helical membrane-spanning segment; that stretch reads VHNLHGLPGVIGGLAGIITVA. Over 353-371 the chain is Extracellular; it reads LEESDSTKTVSQAAALGSS. The chain crosses the membrane as a helical span at residues 372-392; that stretch reads IATALVGGLITGAILKIPFWA. Residues 393 to 426 are Cytoplasmic-facing; sequence QPPDEDCYDDSVYWEVPERKEYDNHFHELLSTLH.

This sequence belongs to the ammonium transporter (TC 2.A.49) family. Rh subfamily. As to quaternary structure, homodimer. Heterotrimer; a RHCE monomer interacts with a RHAG homodimer. Component of the ankyrin-1 complex in the erythrocyte, composed of ANK1, RHCE, RHAG, SLC4A1, EPB42, GYPA, GYPB and AQP1. Interacts with GYPB (via the N-terminal); this interaction bridges the (RHAG)2(RHCE) heterotrimer with the SLC4A1 Band 3 I dimer complexed with GYPA. Glycosylated.

Its subcellular location is the membrane. It carries out the reaction methylamine(out) = methylamine(in). The catalysed reaction is NH4(+)(in) = NH4(+)(out). The enzyme catalyses CO2(out) = CO2(in). Its function is as follows. Component of the ankyrin-1 complex, a multiprotein complex involved in the stability and shape of the erythrocyte membrane. Heterotrimer with RHCE (RHAG)2(RHCE), that transports ammonium and its related derivative methylammonium, in both neutral and ionic forms, across the erythrocyte membrane. The transport of NH4(+) is electrogenic and masks the NH3 transport. Also, may act as a CO2 channel. Moreover in erythrocyte, regulates RHD membrane expression and is associated with rhesus blood group antigen expression. This chain is Ammonium transporter Rh type A, found in Bos taurus (Bovine).